We begin with the raw amino-acid sequence, 953 residues long: Coatomer subunit beta (953 aa).

HEAT repeat units lie at residues 17–54, 96–131, 132–168, 240–276, 277–314, 316–353, and 396–433; these read DSEPPSEISLKNDLEKGDVKLKTEALKKVIIMILNGEK, QEMILVCDAYRKDLQHPNEFIRGSTLRFLCKLKEAE, LLEPLMPAIRACLEHRHSYVRRNAVLAIYTIYRNFEH, SERARFIRCIYNLLQSSSPAVKYEAAGTLVTLSSAPT, AIKAAAQCYIDLIIKESDNNVKLIVLDRLVELKEHPSH, RVLQDLVMDILRVLSTPDLEVRKKTLQLALDLVSSRNV, and DMAANVIPVLMEFLSDNNEAAAADVLEFVREAIQRFDN.

Oligomeric complex that consists of at least the alpha, beta, beta', gamma, delta, epsilon and zeta subunits.

It localises to the cytoplasm. It is found in the golgi apparatus membrane. The protein resides in the cytoplasmic vesicle. The protein localises to the COPI-coated vesicle membrane. The coatomer is a cytosolic protein complex that binds to dilysine motifs and reversibly associates with Golgi non-clathrin-coated vesicles, which further mediate biosynthetic protein transport from the ER, via the Golgi up to the trans Golgi network. Coatomer complex is required for budding from Golgi membranes, and is essential for the retrograde Golgi-to-ER transport of dilysine-tagged proteins. The sequence is that of Coatomer subunit beta (COPB1) from Gallus gallus (Chicken).